We begin with the raw amino-acid sequence, 304 residues long: ATP synthase gamma chain (304 aa).

This sequence belongs to the ATPase gamma chain family. As to quaternary structure, F-type ATPases have 2 components, CF(1) - the catalytic core - and CF(0) - the membrane proton channel. CF(1) has five subunits: alpha(3), beta(3), gamma(1), delta(1), epsilon(1). CF(0) has three main subunits: a, b and c.

Its subcellular location is the cell membrane. Its function is as follows. Produces ATP from ADP in the presence of a proton gradient across the membrane. The gamma chain is believed to be important in regulating ATPase activity and the flow of protons through the CF(0) complex. This is ATP synthase gamma chain from Mycobacterium ulcerans (strain Agy99).